We begin with the raw amino-acid sequence, 258 residues long: UPF0246 protein YaaA (258 aa).

Belongs to the UPF0246 family.

The chain is UPF0246 protein YaaA from Escherichia coli (strain UTI89 / UPEC).